The following is a 478-amino-acid chain: tRNA modification GTPase MnmE (478 aa).

(6S)-5-formyl-5,6,7,8-tetrahydrofolate contacts are provided by arginine 36, glutamate 94, and lysine 133. The region spanning 230-402 (GIHVVLAGRP…LVETLCAKVG (173 aa)) is the TrmE-type G domain. Asparagine 240 is a K(+) binding site. GTP contacts are provided by residues 240–245 (NAGKSS), 259–265 (TDVAGTT), and 284–287 (DTAG). Serine 244 is a binding site for Mg(2+). Residues threonine 259, valine 261, and threonine 264 each contribute to the K(+) site. Threonine 265 is a binding site for Mg(2+). (6S)-5-formyl-5,6,7,8-tetrahydrofolate is bound at residue lysine 478.

The protein belongs to the TRAFAC class TrmE-Era-EngA-EngB-Septin-like GTPase superfamily. TrmE GTPase family. As to quaternary structure, homodimer. Heterotetramer of two MnmE and two MnmG subunits. K(+) is required as a cofactor.

It localises to the cytoplasm. Exhibits a very high intrinsic GTPase hydrolysis rate. Involved in the addition of a carboxymethylaminomethyl (cmnm) group at the wobble position (U34) of certain tRNAs, forming tRNA-cmnm(5)s(2)U34. The protein is tRNA modification GTPase MnmE of Psychrobacter cryohalolentis (strain ATCC BAA-1226 / DSM 17306 / VKM B-2378 / K5).